Consider the following 561-residue polypeptide: Urocanate hydratase (561 aa).

NAD(+)-binding positions include 52 to 53, Q130, 176 to 178, E196, R201, 242 to 243, 263 to 267, 273 to 274, and Y322; these read GG, GMG, NA, QTSAH, and YL. C410 is an active-site residue. Residue G492 participates in NAD(+) binding.

The protein belongs to the urocanase family. NAD(+) is required as a cofactor.

The protein resides in the cytoplasm. It catalyses the reaction 4-imidazolone-5-propanoate = trans-urocanate + H2O. It participates in amino-acid degradation; L-histidine degradation into L-glutamate; N-formimidoyl-L-glutamate from L-histidine: step 2/3. Its function is as follows. Catalyzes the conversion of urocanate to 4-imidazolone-5-propionate. This chain is Urocanate hydratase, found in Citrobacter koseri (strain ATCC BAA-895 / CDC 4225-83 / SGSC4696).